The primary structure comprises 273 residues: F-actin-capping protein subunit alpha (273 aa).

The protein belongs to the F-actin-capping protein alpha subunit family. As to quaternary structure, component of the F-actin capping complex, composed of a heterodimer of an alpha and a beta subunit.

Its subcellular location is the cytoplasm. It is found in the cytoskeleton. It localises to the actin patch. Functionally, F-actin-capping proteins bind in a Ca(2+)-independent manner to the fast growing ends of actin filaments (barbed end) thereby blocking the exchange of subunits at these ends. Unlike other capping proteins (such as gelsolin and severin), these proteins do not sever actin filaments. This chain is F-actin-capping protein subunit alpha (fac-1), found in Neurospora crassa (strain ATCC 24698 / 74-OR23-1A / CBS 708.71 / DSM 1257 / FGSC 987).